Reading from the N-terminus, the 153-residue chain is S-ribosylhomocysteine lyase (153 aa).

Positions 57, 61, and 124 each coordinate Fe cation.

Belongs to the LuxS family. In terms of assembly, homodimer. Requires Fe cation as cofactor.

It carries out the reaction S-(5-deoxy-D-ribos-5-yl)-L-homocysteine = (S)-4,5-dihydroxypentane-2,3-dione + L-homocysteine. Its function is as follows. Involved in the synthesis of autoinducer 2 (AI-2) which is secreted by bacteria and is used to communicate both the cell density and the metabolic potential of the environment. The regulation of gene expression in response to changes in cell density is called quorum sensing. Catalyzes the transformation of S-ribosylhomocysteine (RHC) to homocysteine (HC) and 4,5-dihydroxy-2,3-pentadione (DPD). This Oceanobacillus iheyensis (strain DSM 14371 / CIP 107618 / JCM 11309 / KCTC 3954 / HTE831) protein is S-ribosylhomocysteine lyase.